The chain runs to 196 residues: Probable peptidyl-prolyl cis-trans isomerase (196 aa).

The N-terminal stretch at 1 to 26 is a signal peptide; that stretch reads MSFIRSALAAAAFVALSIGAVQTASA. The PPIase cyclophilin-type domain occupies 29–194; that stretch reads PENTVILKLK…KIIKATIEAD (166 aa).

This sequence belongs to the cyclophilin-type PPIase family.

The protein localises to the periplasm. It carries out the reaction [protein]-peptidylproline (omega=180) = [protein]-peptidylproline (omega=0). Its function is as follows. PPIases accelerate the folding of proteins. It catalyzes the cis-trans isomerization of proline imidic peptide bonds in oligopeptides. In Brucella melitensis biotype 1 (strain ATCC 23456 / CCUG 17765 / NCTC 10094 / 16M), this protein is Probable peptidyl-prolyl cis-trans isomerase (ppi).